Here is an 845-residue protein sequence, read N- to C-terminus: Beta-mannosidase B (845 aa).

Positions 1 to 20 (MSKLQQFPLSKGWSFRDSED) are disordered. The N-linked (GlcNAc...) asparagine glycan is linked to asparagine 252. The Proton donor role is filled by glutamate 432. N-linked (GlcNAc...) asparagine glycosylation is found at asparagine 717 and asparagine 723.

The protein belongs to the glycosyl hydrolase 2 family. Beta-mannosidase B subfamily.

It carries out the reaction Hydrolysis of terminal, non-reducing beta-D-mannose residues in beta-D-mannosides.. It participates in glycan metabolism; N-glycan degradation. Functionally, exoglycosidase that cleaves the single beta-linked mannose residue from the non-reducing end of beta-mannosidic oligosaccharides of various complexity and length. Prefers mannobiose over mannotriose and has no activity against polymeric mannan. Is also severely restricted by galactosyl substitutions at the +1 subsite. In Neosartorya fischeri (strain ATCC 1020 / DSM 3700 / CBS 544.65 / FGSC A1164 / JCM 1740 / NRRL 181 / WB 181) (Aspergillus fischerianus), this protein is Beta-mannosidase B (mndB).